Reading from the N-terminus, the 149-residue chain is Protein FAM72A (149 aa).

It belongs to the FAM72 family. In terms of assembly, interacts with UNG. May be up-regulated in malignant colon cancers, compared to normal colon and colon adenomas. Expression is also elevated in other common cancer types, including breast, lung, uterus, and ovary.

The protein resides in the cytoplasm. It localises to the mitochondrion. Functionally, may play a role in the regulation of cellular reactive oxygen species metabolism. May participate in cell growth regulation. In Homo sapiens (Human), this protein is Protein FAM72A (FAM72A).